The primary structure comprises 151 residues: MQDLYQLIGEKLNDIIPGEWTKIYLYAEVLDDSTMVLFHFRTPENNQIIYSQDIPSHYNVSKDIFKTLLRELRELFEELRTEHRNNNDDVWTNLTLTLDRSGEFQLDYNYDDILASELDGYERIAIWEYKNLGILPEDEDDKEFVISYLGL.

Residues 62-90 (KDIFKTLLRELRELFEELRTEHRNNNDDV) adopt a coiled-coil conformation.

In terms of assembly, interacts with cognate toxin YeeF but not with non-cognate toxin YobL. The interaction probably inhibits the toxic activity of YeeF. May bind with a stoichiometry of 2:2 to YeeF.

It is found in the cytoplasm. Functionally, immunity component of one of 6 LXG toxin-immunity modules in this strain. They promote kin selection, mediate competition in biofilms, and drive spatial segregation of different strains, indicating that LXG toxins may help avoid warfare between strains in biofilms. Mediates intercellular competition during biofilm formation; disruption of the operon disadvantages the bacteria, but overexpression of the cognate immunity protein restores growth in competition with wild-type. In situ neutralizes the toxic effect of cognate toxin YeeF. Probably neutralizes the ability to inhibit growth of cognate toxin YeeF. Probably does not have immunity protein activity on other LXG toxins. This chain is Immunity protein YezG (yezG), found in Bacillus subtilis (strain 168).